The sequence spans 392 residues: Xyloside xylosyltransferase 1 (392 aa).

Residues methionine 1–alanine 19 lie on the Cytoplasmic side of the membrane. The helical; Signal-anchor for type II membrane protein transmembrane segment at leucine 20–glycine 42 threads the bilayer. Residues serine 43–aspartate 392 are Lumenal-facing. UDP-alpha-D-xylose is bound at residue methionine 103–threonine 105. Aspartate 225 is a Mn(2+) binding site. Residue leucine 226 participates in UDP-alpha-D-xylose binding. Aspartate 227 is a binding site for Mn(2+). The tract at residues histidine 262 to tryptophan 265 is interaction with target proteins. 3 residues coordinate UDP-alpha-D-xylose: serine 289, leucine 327, and glutamine 330. The a glycoprotein site is built by glutamine 330 and tryptophan 359. Intrachain disulfides connect cysteine 349–cysteine 374 and cysteine 356–cysteine 385. Residue histidine 382 coordinates Mn(2+). Residue asparagine 384 participates in a glycoprotein binding.

It belongs to the glycosyltransferase 8 family. As to quaternary structure, homodimer. Dimer formation may be essential for the retention in endoplasmic reticulum. The cofactor is Mg(2+). Mn(2+) is required as a cofactor.

It localises to the endoplasmic reticulum membrane. The catalysed reaction is 3-O-[alpha-D-xylosyl-(1-&gt;3)-beta-D-glucosyl]-L-seryl-[EGF-like domain protein] + UDP-alpha-D-xylose = 3-O-[alpha-D-xylosyl-(1-&gt;3)-alpha-D-xylosyl-(1-&gt;3)-beta-D-glucosyl]-L-seryl-[EGF-like domain protein] + UDP + H(+). Its function is as follows. Alpha-1,3-xylosyltransferase, which elongates the O-linked xylose-glucose disaccharide attached to EGF-like repeats in the extracellular domain of target proteins by catalyzing the addition of the second xylose. Known targets include Notch proteins and coagulation factors, such as F9. This Mus musculus (Mouse) protein is Xyloside xylosyltransferase 1 (Xxylt1).